Reading from the N-terminus, the 462-residue chain is Argininosuccinate lyase (462 aa).

This sequence belongs to the lyase 1 family. Argininosuccinate lyase subfamily.

It is found in the cytoplasm. The catalysed reaction is 2-(N(omega)-L-arginino)succinate = fumarate + L-arginine. It functions in the pathway amino-acid biosynthesis; L-arginine biosynthesis; L-arginine from L-ornithine and carbamoyl phosphate: step 3/3. The sequence is that of Argininosuccinate lyase from Pelagibacter ubique (strain HTCC1062).